The sequence spans 663 residues: UvrABC system protein B (663 aa).

One can recognise a Helicase ATP-binding domain in the interval 26-414 (DGLESGLAKQ…DNVAEQVVRP (389 aa)). 39 to 46 (GVTGSGKT) lines the ATP pocket. Residues 92–115 (YYDYYQPEAYVPASDTFIEKDASI) carry the Beta-hairpin motif. One can recognise a Helicase C-terminal domain in the interval 430-596 (QVDDLMSEIR…GINKSVEDIL (167 aa)). The UVR domain occupies 624-659 (AKQINALEKQMYAHAQNMEFELAAKIRDEYLLLKEQ).

It belongs to the UvrB family. Forms a heterotetramer with UvrA during the search for lesions. Interacts with UvrC in an incision complex.

Its subcellular location is the cytoplasm. The UvrABC repair system catalyzes the recognition and processing of DNA lesions. A damage recognition complex composed of 2 UvrA and 2 UvrB subunits scans DNA for abnormalities. Upon binding of the UvrA(2)B(2) complex to a putative damaged site, the DNA wraps around one UvrB monomer. DNA wrap is dependent on ATP binding by UvrB and probably causes local melting of the DNA helix, facilitating insertion of UvrB beta-hairpin between the DNA strands. Then UvrB probes one DNA strand for the presence of a lesion. If a lesion is found the UvrA subunits dissociate and the UvrB-DNA preincision complex is formed. This complex is subsequently bound by UvrC and the second UvrB is released. If no lesion is found, the DNA wraps around the other UvrB subunit that will check the other stand for damage. The sequence is that of UvrABC system protein B from Legionella pneumophila (strain Lens).